Reading from the N-terminus, the 423-residue chain is MSDIISAVDAMEVLDSRGNPTVRVFVTLDNGTTCAASVPSGASTGENEAIELRDGDASRYLGKGVLKAVDNVKNIIAPAVIGKKITHQAAIDNLMIELDGTETKSSLGANAILGVSMAVARAGARSSRLPLYQYLGGPGARRIPVPAMNIINGGEHADNSVDIQEFMAVPVGAPSFGEGLRYIAETFHNLKKILKSRGLATSVGDEGGFAPNLESNEAAMDIIIEAIEASGYTPGKDIAFALDSAASSFSPDLCGSYDLKWSGGGKKDSADMIAMAQKWIEKYPIVSWEDPLAENDWAGFQKLTAAVGDKIDVVGDDLFVTNTKYIARGIEEKSANSVLIKLNQIGTVTESIDAVRMCREAGWRYFISHRSGETEDTFLADFAVAMDGGQLKTGSASRSERIAKYNRLLEIERELGANALYYW.

A (2R)-2-phosphoglycerate-binding site is contributed by Gln-164. The active-site Proton donor is the Glu-206. Residues Asp-243, Glu-289, and Asp-316 each contribute to the Mg(2+) site. 4 residues coordinate (2R)-2-phosphoglycerate: Lys-341, Arg-370, Ser-371, and Lys-392. Lys-341 serves as the catalytic Proton acceptor.

It belongs to the enolase family. Mg(2+) is required as a cofactor.

It localises to the cytoplasm. It is found in the secreted. Its subcellular location is the cell surface. It catalyses the reaction (2R)-2-phosphoglycerate = phosphoenolpyruvate + H2O. Its pathway is carbohydrate degradation; glycolysis; pyruvate from D-glyceraldehyde 3-phosphate: step 4/5. In terms of biological role, catalyzes the reversible conversion of 2-phosphoglycerate (2-PG) into phosphoenolpyruvate (PEP). It is essential for the degradation of carbohydrates via glycolysis. The protein is Enolase of Desulfotalea psychrophila (strain LSv54 / DSM 12343).